A 724-amino-acid polypeptide reads, in one-letter code: Membrane protein YdfJ (724 aa).

Transmembrane regions (helical) follow at residues 17-37, 179-199, 200-220, 231-251, 277-297, 309-329, 360-380, 512-532, 539-559, 575-595, 627-647, and 655-675; these read IKAI…AVTL, IVGI…LLIA, GLPI…VLIG, LSLA…FIFT, AVVF…VVNI, LSVL…LSIA, IMLS…SMHL, AIPV…TIVF, LVAV…CVFV, GPIL…LAMD, PVVT…IFAG, and GLAL…TLIP.

This sequence belongs to the resistance-nodulation-cell division (RND) (TC 2.A.6) family. MmpL subfamily.

It localises to the cell membrane. This is Membrane protein YdfJ (ydfJ) from Bacillus subtilis (strain 168).